The sequence spans 643 residues: Alpha-dioxygenase PIOX (643 aa).

The active-site Proton acceptor is H167. D168 lines the Ca(2+) pocket. H172 provides a ligand contact to heme b. The Ca(2+) site is built by T220, W222, D224, and S226. The heme b site is built by H392, R489, and R493.

This sequence belongs to the peroxidase family. Heme b is required as a cofactor. Ca(2+) serves as cofactor.

The enzyme catalyses a 1,2-saturated fatty acid + O2 = a (2R)-2-hydroperoxy fatty acid. It carries out the reaction (9Z,12Z,15Z)-octadecatrienoate + O2 = (R)-2-hydroperoxy-(9Z,12Z,15Z)-octadecatrienoate. It catalyses the reaction (9Z,12Z)-octadecadienoate + O2 = (2R,9Z,12Z)-2-hydroperoxyoctadecadienoate. Functionally, alpha-dioxygenase that catalyzes the primary oxygenation step of a variety of 14-20 carbon fatty acids, containing up to three unsaturated bonds, into their corresponding 2R-hydroperoxides. Involved in the production of oxylipins that function in cell signaling, wound healing, and protection from infection. This Nicotiana tabacum (Common tobacco) protein is Alpha-dioxygenase PIOX.